A 780-amino-acid chain; its full sequence is Vacuolar protein sorting-associated protein 51 homolog (780 aa).

The residue at position 2 (Ala2) is an N-acetylalanine. 2 disordered regions span residues 270–292 (STLV…PAKI) and 615–651 (QGTF…SNSQ). Over residues 273–284 (VEDDDSSNDTES) the composition is skewed to acidic residues. Residues 626-639 (SNGSNTTTSSRSNT) are compositionally biased toward low complexity.

This sequence belongs to the VPS51 family. As to quaternary structure, component of the Golgi-associated retrograde protein (GARP) complex, composed by VPS51, VPS52, VPS53 and VPS54. Component of the endosome-associated retrograde protein (EARP) complex, composed of VPS51, VPS52, VPS53 and VPS50. Interacts with VPS52. As to expression, expressed in primary and lateral roots, shoots of seedlings and flowers.

The protein localises to the golgi apparatus. It is found in the trans-Golgi network. Its subcellular location is the recycling endosome. It localises to the prevacuolar compartment. Its function is as follows. Acts as a component of the GARP complex that is involved in retrograde transport from early and late endosomes to the trans-Golgi network (TGN). The GARP complex is required for the maintenance of protein retrieval from endosomes to the TGN, acid hydrolase sorting, lysosome function, endosomal cholesterol traffic and autophagy. VPS51 participates in retrograde transport of acid hydrolase receptors, likely by promoting tethering and SNARE-dependent fusion of endosome-derived carriers to the TGN. Acts as a component of the EARP complex that is involved in endocytic recycling. The EARP complex associates with Rab4-positive endosomes and promotes recycling of internalized transferrin receptor (TFRC) to the plasma membrane. Required for vacuolar targeting and cellular trafficking. Involved in the regulation of vascular tissue patterning, probably by regulating PIN1 expression pattern, thus modulating auxin flux. Important to prevent PIN1 accumulation within margin cells, possibly by targeting PIN1 to the lytic vacuole. Regulates PIN1 and ATHB8 expression pattern in secondary veins. This Arabidopsis thaliana (Mouse-ear cress) protein is Vacuolar protein sorting-associated protein 51 homolog.